The following is a 184-amino-acid chain: ATP synthase subunit b, chloroplastic (184 aa).

The chain crosses the membrane as a helical span at residues 31-49; the sequence is IINSSVVLSVLIYFGKGVL.

It belongs to the ATPase B chain family. F-type ATPases have 2 components, F(1) - the catalytic core - and F(0) - the membrane proton channel. F(1) has five subunits: alpha(3), beta(3), gamma(1), delta(1), epsilon(1). F(0) has four main subunits: a(1), b(1), b'(1) and c(10-14). The alpha and beta chains form an alternating ring which encloses part of the gamma chain. F(1) is attached to F(0) by a central stalk formed by the gamma and epsilon chains, while a peripheral stalk is formed by the delta, b and b' chains.

The protein resides in the plastid. The protein localises to the chloroplast thylakoid membrane. Its function is as follows. F(1)F(0) ATP synthase produces ATP from ADP in the presence of a proton or sodium gradient. F-type ATPases consist of two structural domains, F(1) containing the extramembraneous catalytic core and F(0) containing the membrane proton channel, linked together by a central stalk and a peripheral stalk. During catalysis, ATP synthesis in the catalytic domain of F(1) is coupled via a rotary mechanism of the central stalk subunits to proton translocation. In terms of biological role, component of the F(0) channel, it forms part of the peripheral stalk, linking F(1) to F(0). The protein is ATP synthase subunit b, chloroplastic of Pinus thunbergii (Japanese black pine).